We begin with the raw amino-acid sequence, 142 residues long: Hemoglobin F-I (142 aa).

A Globin domain is found at 2–142 (GLTTAQIKAI…AAGVLVAAMK (141 aa)). Position 95 (histidine 95) interacts with heme b.

The protein belongs to the globin family. In terms of assembly, homotetramer.

Its function is as follows. Hemoglobin F-I appears to function in storage, rather than transport of oxygen. The polypeptide is Hemoglobin F-I (Urechis caupo (Innkeeper worm)).